The sequence spans 116 residues: Large ribosomal subunit protein bL17 (116 aa).

The protein belongs to the bacterial ribosomal protein bL17 family. Part of the 50S ribosomal subunit. Contacts protein L32.

The polypeptide is Large ribosomal subunit protein bL17 (Synechococcus sp. (strain JA-3-3Ab) (Cyanobacteria bacterium Yellowstone A-Prime)).